Reading from the N-terminus, the 308-residue chain is Glutaminase 2 (308 aa).

Substrate is bound by residues Ser66, Asn117, Glu161, Asn168, Tyr192, Tyr244, and Val262.

Belongs to the glutaminase family. As to quaternary structure, homotetramer.

It catalyses the reaction L-glutamine + H2O = L-glutamate + NH4(+). The sequence is that of Glutaminase 2 from Shigella flexneri.